The primary structure comprises 376 residues: tRNA-specific 2-thiouridylase MnmA (376 aa).

ATP contacts are provided by residues 10–17 (GMSGGVDS) and M36. Residues 96 to 98 (NPD) are interaction with target base in tRNA. The active-site Nucleophile is C101. The cysteines at positions 101 and 198 are disulfide-linked. Position 125 (G125) interacts with ATP. Residues 148 to 150 (KDQ) form an interaction with tRNA region. C198 acts as the Cysteine persulfide intermediate in catalysis. An interaction with tRNA region spans residues 305–306 (RY).

Belongs to the MnmA/TRMU family.

It localises to the cytoplasm. It catalyses the reaction S-sulfanyl-L-cysteinyl-[protein] + uridine(34) in tRNA + AH2 + ATP = 2-thiouridine(34) in tRNA + L-cysteinyl-[protein] + A + AMP + diphosphate + H(+). Functionally, catalyzes the 2-thiolation of uridine at the wobble position (U34) of tRNA, leading to the formation of s(2)U34. This chain is tRNA-specific 2-thiouridylase MnmA, found in Protochlamydia amoebophila (strain UWE25).